A 280-amino-acid chain; its full sequence is CAG pathogenicity island protein 12 (280 aa).

The first 20 residues, 1 to 20 (MKLRASVLIGATILCLILSA), serve as a signal peptide directing secretion. Residue cysteine 21 is the site of N-palmitoyl cysteine attachment. Cysteine 21 carries S-diacylglycerol cysteine lipidation.

It is found in the cell membrane. In Helicobacter pylori (strain ATCC 700392 / 26695) (Campylobacter pylori), this protein is CAG pathogenicity island protein 12 (cagT).